Reading from the N-terminus, the 852-residue chain is MQNLDIRKAYLDFFKSKGHEVVASAPLVPNDATLLFTNAGMVPFKSIFTGEVPRPTPPIRTSCQTCIRAGGKHNDLDNVGYTARHHTFFEMLGNFSFGEYFKKEAIAYAWEFVTEVLKLPKDKLYVTVHESDYEAFEIWSTHIAKERIYRFGDHDNFWQMGDTGPCGPCSEIFYDQGAEHFNTPEDYMGGDGDRFLEIWNLVFMQYERSADGKLSPLPKPSIDTGMGLERVTAILQGKFSNYDSTLFMPLISEVAKLCGKPYVYESGASYRVISDHIRSVTFLLAQGTTFDKEGRGYVLRRILRRAIRHGYLLGIKEPFMYKLVDKVCELMGGHYTYLNDKKAAVKEQIKLEEERFLATIASGLELFESELKNTKEIFSGEAAFKLYDTFGFPLDLTADMLREKGLKVDEARFDELMSEQKARAKAAWKGSGDKSAKGDFKELLEKFGENKFIGYEELKSKSKILALLDEEFKNIDGLDAGKEGWVMFDVTPFYAQSGGQCGDNGKIVGKADVLDTEKFHGLNLSLVKTSAALKVGDEVELEVGSDRAETARHHSATHLLHAALRAVVGTHIAQAGSNVEADRLRFDFSHPKALSGEEISKVENLVNEWIVNGANAKTQVMELEEAKKSGAIALFNEKYADKVRVVSFGDVSKELCGGTHVKNIDEIGSFFITKESGVSAGVRRIEAVCSRAALNLARSFRAELEELKEELKSAEPLNAVKKLKGEIKGLKDKLKNAKNSHALAFLNVNDTKLCVASIDSGDIKTLIDEFKNEHEKAAILLIQVDEEGKISLAAGVKNAPIKAGAWVKFAAQILGGNGGGKDDFATAGGKNALAIEDAIRSSVEYARQALEK.

Residues His554, His558, Cys656, and His660 each coordinate Zn(2+).

The protein belongs to the class-II aminoacyl-tRNA synthetase family. The cofactor is Zn(2+).

It localises to the cytoplasm. It carries out the reaction tRNA(Ala) + L-alanine + ATP = L-alanyl-tRNA(Ala) + AMP + diphosphate. In terms of biological role, catalyzes the attachment of alanine to tRNA(Ala) in a two-step reaction: alanine is first activated by ATP to form Ala-AMP and then transferred to the acceptor end of tRNA(Ala). Also edits incorrectly charged Ser-tRNA(Ala) and Gly-tRNA(Ala) via its editing domain. This is Alanine--tRNA ligase from Campylobacter concisus (strain 13826).